A 313-amino-acid polypeptide reads, in one-letter code: Porphobilinogen deaminase (313 aa).

An S-(dipyrrolylmethanemethyl)cysteine modification is found at C242.

It belongs to the HMBS family. In terms of assembly, monomer. Requires dipyrromethane as cofactor.

The enzyme catalyses 4 porphobilinogen + H2O = hydroxymethylbilane + 4 NH4(+). Its pathway is porphyrin-containing compound metabolism; protoporphyrin-IX biosynthesis; coproporphyrinogen-III from 5-aminolevulinate: step 2/4. In terms of biological role, tetrapolymerization of the monopyrrole PBG into the hydroxymethylbilane pre-uroporphyrinogen in several discrete steps. The protein is Porphobilinogen deaminase of Escherichia coli O6:H1 (strain CFT073 / ATCC 700928 / UPEC).